Consider the following 1090-residue polypeptide: UPF0507 protein SCY_4172 (1090 aa).

A VPS9 domain is found at 289-436; it reads FSVNQLLTDF…FEDFNKNTGN (148 aa).

The protein belongs to the UPF0507 family.

The polypeptide is UPF0507 protein SCY_4172 (Saccharomyces cerevisiae (strain YJM789) (Baker's yeast)).